The following is a 572-amino-acid chain: Delta-1-pyrroline-5-carboxylate dehydrogenase, mitochondrial (572 aa).

300-305 (GQISTR) provides a ligand contact to NAD(+). Residue Glu-320 is the Proton acceptor of the active site. Residue Cys-354 is the Nucleophile of the active site.

Belongs to the aldehyde dehydrogenase family.

It localises to the mitochondrion matrix. It carries out the reaction L-glutamate 5-semialdehyde + NAD(+) + H2O = L-glutamate + NADH + 2 H(+). Its pathway is amino-acid degradation; L-proline degradation into L-glutamate; L-glutamate from L-proline: step 2/2. In Emericella nidulans (strain FGSC A4 / ATCC 38163 / CBS 112.46 / NRRL 194 / M139) (Aspergillus nidulans), this protein is Delta-1-pyrroline-5-carboxylate dehydrogenase, mitochondrial (prnC).